We begin with the raw amino-acid sequence, 393 residues long: Iripin-5 (393 aa).

An N-terminal signal peptide occupies residues 1-16 (MKTLIVLMCSLVVVWA). N-linked (GlcNAc...) asparagine glycosylation is found at Asn-198 and Asn-245.

Belongs to the serpin family. Highly expressed in female salivary gland during blood feeding. Expressed in female midgut and ovary during blood feeding.

Its subcellular location is the secreted. Its function is as follows. Serine protease inhibitor that modulates blood feeding of ticks on vertebrate species. Inhibits host neutrophil elastase (ELANE) and proteinase 3/myeloblastin (PRTN3). Moderately inhibits host chymase, cathepsin G (CTSG), trypsin and alpha-chymotrypsin. Decreases host neutrophil migration. Decreases nitric oxide production by host macrophages. Decreases host complement activity. The sequence is that of Iripin-5 from Ixodes ricinus (Common tick).